Here is a 134-residue protein sequence, read N- to C-terminus: C-C motif chemokine 21 (134 aa).

An N-terminal signal peptide occupies residues 1–23 (MAQSLALSLLILVLAFGIPRTQG). 3 cysteine pairs are disulfide-bonded: Cys31–Cys57, Cys32–Cys75, and Cys103–Cys122. Positions 88-134 (QHLDKTPSPQKPAQGCRKDRGASKTGKKGKGSKGCKRTERSQTPKGP) are disordered. Residues 98-134 (KPAQGCRKDRGASKTGKKGKGSKGCKRTERSQTPKGP) are C-terminal basic extension. The segment covering 112-122 (TGKKGKGSKGC) has biased composition (basic residues). Basic and acidic residues predominate over residues 123 to 134 (KRTERSQTPKGP).

The protein belongs to the intercrine beta (chemokine CC) family. As to quaternary structure, monomer. Binds to CCR7. Interacts with PDPN; relocalizes PDPN to the basolateral membrane. Interacts with TNFAIP6 (via Link domain). Interacts with GPR174. As to expression, highly expressed in high endothelial venules of lymph nodes, spleen and appendix. Intermediate levels found in small intestine, thyroid gland and trachea. Low level expression in thymus, bone marrow, liver, and pancreas. Also found in tonsil, fetal heart and fetal spleen.

It is found in the secreted. Inhibits hemopoiesis and stimulates chemotaxis. Chemotactic in vitro for thymocytes and activated T-cells, but not for B-cells, macrophages, or neutrophils. Shows preferential activity towards naive T-cells. May play a role in mediating homing of lymphocytes to secondary lymphoid organs. Binds to atypical chemokine receptor ACKR4 and mediates the recruitment of beta-arrestin (ARRB1/2) to ACKR4. This is C-C motif chemokine 21 (CCL21) from Homo sapiens (Human).